An 888-amino-acid polypeptide reads, in one-letter code: Villin-like protein quail (888 aa).

One copy of the Gelsolin-like repeat lies at 307–366 (GVYLLDNYGQSIWLWVGGQAPQADALSAMGNGRAFVKKKKYPDNTLVVRVLEGHEPVEFK). The HP domain occupies 823-888 (FDGHKKYPLT…MELKKQFKLF (66 aa)).

The protein belongs to the villin/gelsolin family. Germline specific in adult flies.

In terms of biological role, required for the formation of cytoplasmic actin filament bundles in nurse cells, possibly by regulating both the polymerization and organization of actin filaments. Mutations in quail result in female sterility due to the disruption of cytoplasmic transport from the nurse cells into the oocyte late in oogenesis. The sequence is that of Villin-like protein quail (qua) from Drosophila melanogaster (Fruit fly).